Here is a 188-residue protein sequence, read N- to C-terminus: Molybdopterin synthase catalytic subunit (188 aa).

Serine 20 is modified (phosphoserine). Substrate is bound by residues 143–144 (HR), lysine 159, and 166–168 (KKE).

It belongs to the MoaE family. MOCS2B subfamily. In terms of assembly, heterotetramer; composed of 2 small (MOCS2A) and 2 large (MOCS2B) subunits. Highest levels are found in heart and skeletal muscle. Lower levels are present in brain, kidney and pancreas. Very low levels are found in lung and peripheral blood leukocytes.

It localises to the cytoplasm. It is found in the cytosol. It catalyses the reaction 2 [molybdopterin-synthase sulfur-carrier protein]-C-terminal-Gly-aminoethanethioate + cyclic pyranopterin phosphate + H2O = molybdopterin + 2 [molybdopterin-synthase sulfur-carrier protein]-C-terminal Gly-Gly + 2 H(+). It functions in the pathway cofactor biosynthesis; molybdopterin biosynthesis. Catalytic subunit of the molybdopterin synthase complex, a complex that catalyzes the conversion of precursor Z into molybdopterin. Acts by mediating the incorporation of 2 sulfur atoms from thiocarboxylated MOCS2A into precursor Z to generate a dithiolene group. This is Molybdopterin synthase catalytic subunit from Homo sapiens (Human).